The primary structure comprises 344 residues: Phosphoribosylformylglycinamidine cyclo-ligase (344 aa).

This sequence belongs to the AIR synthase family.

The protein resides in the cytoplasm. The catalysed reaction is 2-formamido-N(1)-(5-O-phospho-beta-D-ribosyl)acetamidine + ATP = 5-amino-1-(5-phospho-beta-D-ribosyl)imidazole + ADP + phosphate + H(+). Its pathway is purine metabolism; IMP biosynthesis via de novo pathway; 5-amino-1-(5-phospho-D-ribosyl)imidazole from N(2)-formyl-N(1)-(5-phospho-D-ribosyl)glycinamide: step 2/2. The chain is Phosphoribosylformylglycinamidine cyclo-ligase from Bifidobacterium animalis subsp. lactis (strain AD011).